The following is a 740-amino-acid chain: Homeobox protein 4 (740 aa).

Over residues 1-13 (MNTVEENNTKITD) the composition is skewed to polar residues. Disordered stretches follow at residues 1–41 (MNTV…ENLS) and 179–491 (NNNN…NNEI). Low complexity-rich tracts occupy residues 14-34 (NNNNNNNNNNNNNNNNNNNKN), 179-241 (NNNN…PQQN), 251-288 (NNNNINNNNINKNNNNYNNNNNNKNNNNNNNNNNNNNN), and 303-316 (STTDNTSSVSSVPS). Positions 254-287 (NINNNNINKNNNNYNNNNNNKNNNNNNNNNNNNN) form a coiled coil. Basic residues predominate over residues 317 to 328 (NKKKSSKTKQKS). A compositionally biased stretch (polar residues) spans 339–363 (HKSNYHQQPNQNSQHLQSKPNSPIL). Low complexity-rich tracts occupy residues 365-390 (SSPLNSQQNSSPPQPSPTQSFLSPPQ) and 397-491 (NNNF…NNEI). Residues 472-500 (NTNTNNNNNKNNNNNNNNEIENNNNEELI) adopt a coiled-coil conformation. Residues 605–667 (RPKKGAKLSK…NTRRRKVPTL (63 aa)) constitute a DNA-binding region (homeobox). The span at 686 to 722 (NNNNNNGGNSNFKNNNNNTITTTSTSNNNNNNNNNNH) shows a compositional bias: low complexity. Residues 686–740 (NNNNNNGGNSNFKNNNNNTITTTSTSNNNNNNNNNNHNEMECDDGENEESSEYDD) are disordered. A compositionally biased stretch (acidic residues) spans 726-740 (ECDDGENEESSEYDD).

Its subcellular location is the nucleus. Its function is as follows. Putative transcription factor. This is Homeobox protein 4 (hbx4) from Dictyostelium discoideum (Social amoeba).